We begin with the raw amino-acid sequence, 271 residues long: Tryptophan synthase alpha chain (271 aa).

Active-site proton acceptor residues include E49 and D60.

Belongs to the TrpA family. Tetramer of two alpha and two beta chains.

It catalyses the reaction (1S,2R)-1-C-(indol-3-yl)glycerol 3-phosphate + L-serine = D-glyceraldehyde 3-phosphate + L-tryptophan + H2O. Its pathway is amino-acid biosynthesis; L-tryptophan biosynthesis; L-tryptophan from chorismate: step 5/5. Functionally, the alpha subunit is responsible for the aldol cleavage of indoleglycerol phosphate to indole and glyceraldehyde 3-phosphate. The sequence is that of Tryptophan synthase alpha chain from Burkholderia cenocepacia (strain ATCC BAA-245 / DSM 16553 / LMG 16656 / NCTC 13227 / J2315 / CF5610) (Burkholderia cepacia (strain J2315)).